A 523-amino-acid chain; its full sequence is Succinate-semialdehyde dehydrogenase, mitochondrial (523 aa).

The transit peptide at 1–35 (MATCFLLRNFCAARPALRPPGRLLREPAGAQRRSY) directs the protein to the mitochondrion. Lysine 114 bears the N6-acetyllysine; alternate mark. Position 114 is an N6-succinyllysine; alternate (lysine 114). An N6-succinyllysine mark is found at lysine 123 and lysine 172. NAD(+)-binding positions include arginine 201 and 216 to 219 (KPAE). Arginine 201 lines the substrate pocket. Lysine 253 is subject to N6-acetyllysine; alternate. Position 253 is an N6-succinyllysine; alternate (lysine 253). Residue 272 to 277 (GSTATG) coordinates NAD(+). Glutamate 294 acts as the Proton acceptor in catalysis. Residue arginine 322 coordinates substrate. Cysteine 328 (nucleophile) is an active-site residue. A disulfide bridge connects residues cysteine 328 and cysteine 330. An N6-acetyllysine modification is found at lysine 353. Lysine 390 carries the N6-succinyllysine modification. N6-acetyllysine is present on lysine 399. Residue serine 486 participates in substrate binding. At serine 487 the chain carries Phosphoserine.

This sequence belongs to the aldehyde dehydrogenase family. Homotetramer. In terms of tissue distribution, brain, pancreas, heart, liver, skeletal muscle, kidney. Lower in spleen, lung, kidney and testis.

It localises to the mitochondrion. It carries out the reaction succinate semialdehyde + NAD(+) + H2O = succinate + NADH + 2 H(+). Its pathway is amino-acid degradation; 4-aminobutanoate degradation. Redox-regulated. Inhibited under oxydizing conditions. In terms of biological role, catalyzes one step in the degradation of the inhibitory neurotransmitter gamma-aminobutyric acid (GABA). This Rattus norvegicus (Rat) protein is Succinate-semialdehyde dehydrogenase, mitochondrial (Aldh5a1).